A 377-amino-acid polypeptide reads, in one-letter code: uncharacterized protein (377 aa).

Transmembrane regions (helical) follow at residues 4-24, 41-61, 85-105, 134-154, 159-179, 192-212, 278-298, 301-321, 327-347, and 356-376; these read LLTP…LLGT, ASFG…FPIT, IAAL…FLFG, FHAM…IATV, VYVH…PFLL, GAVG…IALA, VFGI…AGFV, GVGY…DLVV, IASV…AIGL, and LCFF…PVLK.

This sequence to R.meliloti MosC.

The protein localises to the cell membrane. Functionally, could be involved in a transport system. This is an uncharacterized protein from Sinorhizobium fredii (strain NBRC 101917 / NGR234).